A 149-amino-acid polypeptide reads, in one-letter code: Nucleoside diphosphate kinase (149 aa).

6 residues coordinate ATP: K9, F57, R85, T91, R102, and N112. The active-site Pros-phosphohistidine intermediate is the H115.

This sequence belongs to the NDK family. In terms of assembly, homotetramer. The cofactor is Mg(2+).

It is found in the cytoplasm. It catalyses the reaction a 2'-deoxyribonucleoside 5'-diphosphate + ATP = a 2'-deoxyribonucleoside 5'-triphosphate + ADP. It carries out the reaction a ribonucleoside 5'-diphosphate + ATP = a ribonucleoside 5'-triphosphate + ADP. Major role in the synthesis of nucleoside triphosphates other than ATP. The ATP gamma phosphate is transferred to the NDP beta phosphate via a ping-pong mechanism, using a phosphorylated active-site intermediate. The chain is Nucleoside diphosphate kinase from Desulforamulus reducens (strain ATCC BAA-1160 / DSM 100696 / MI-1) (Desulfotomaculum reducens).